Consider the following 418-residue polypeptide: ML-236A carboxylate methylbutanoyltransferase mlcH (418 aa).

Residue Arg-78 coordinates monacolin J. Residue Ser-81 is the Acyl-ester intermediate of the active site. Monacolin J contacts are provided by Arg-178, Tyr-193, and Tyr-262. Gly-370 is a 2-methylbutanoate binding site.

This sequence belongs to the class-A beta-lactamase family.

It carries out the reaction ML-236A carboxylate + (S)-2-methylbutanoyl-[2-methylbutanoate polyketide synthase] = mevinic carboxylate + holo-[2-methylbutanoate polyketide synthase]. The protein operates within polyketide biosynthesis. In terms of biological role, compactin diketide synthase; part of the gene cluster that mediates the biosynthesis of compactin, also known as mevastatin or ML-236B, and which acts as a potent competitive inhibitor of HMG-CoA reductase. Compactin biosynthesis is performed in two stages. The first stage is catalyzed by the nonaketide synthase mlcA, which belongs to type I polyketide synthases and catalyzes the iterative nine-step formation of the polyketide. This PKS stage is completed by the action of dehydrogenase mlcG, which catalyzes the NADPH-dependent reduction of the unsaturated tetra-, penta- and heptaketide intermediates that arise during the mlcA-mediated biosynthesis of the nonaketide chain and leads to dihydro-ML-236C carboxylate. Covalently bound dihydro-ML-236C carboxylate is released from mlcA by the mlcF esterase. Conversion of dihydro-ML-236C carboxylate into ML-236A carboxylate is subsequently performed with the participation of molecular oxygen and P450 monoogygenase mlcC. Finally, mlcH performs the conversion of ML-236A carboxylate to ML-236B/compactin carboxylate through the addition of the side-chain diketide moiety produced by the diketide synthase mlcB. The chain is ML-236A carboxylate methylbutanoyltransferase mlcH from Penicillium citrinum.